The following is a 575-amino-acid chain: Serine/threonine-protein phosphatase 2A regulatory subunit B'' subunit beta (575 aa).

Positions Ala-41 to Pro-131 are disordered. The region spanning Lys-388–Arg-423 is the EF-hand domain. Ca(2+) is bound by residues Asp-401, Asp-403, Asp-405, and Glu-412.

PP2A consists of a common heterodimeric core enzyme, composed of a 36 kDa catalytic subunit (subunit C) and a 65 kDa constant regulatory subunit (PR65 or subunit A), that associates with a variety of regulatory subunits. Proteins that associate with the core dimer include three families of regulatory subunits B (the R2/B/PR55/B55, R3/B''/PR72/PR130/PR59 and R5/B'/B56 families), the 48 kDa variable regulatory subunit, viral proteins, and cell signaling molecules. Interacts with N-terminal region of CDC6. Interacts with NOD2.

It is found in the nucleus. The B regulatory subunit might modulate substrate selectivity and catalytic activity, and might also direct the localization of the catalytic enzyme to a particular subcellular compartment. The sequence is that of Serine/threonine-protein phosphatase 2A regulatory subunit B'' subunit beta (PPP2R3B) from Homo sapiens (Human).